Consider the following 219-residue polypeptide: Translation initiation factor IF-3 (219 aa).

The protein belongs to the IF-3 family. In terms of assembly, monomer.

The protein resides in the cytoplasm. Functionally, IF-3 binds to the 30S ribosomal subunit and shifts the equilibrium between 70S ribosomes and their 50S and 30S subunits in favor of the free subunits, thus enhancing the availability of 30S subunits on which protein synthesis initiation begins. This chain is Translation initiation factor IF-3, found in Prochlorococcus marinus (strain MIT 9313).